Reading from the N-terminus, the 408-residue chain is Two-pore potassium channel 5 (408 aa).

Disordered stretches follow at residues 1–29 and 58–82; these read MEPLISPQPRFRLQPIPENPSSSSSSASI and QSVQDDKEDQDSDSDETNRFLSQTR. The span at 15-29 shows a compositional bias: low complexity; that stretch reads PIPENPSSSSSSASI. The Stromal portion of the chain corresponds to 22-115; that stretch reads SSSSSASITI…TKKPSPVSKS (94 aa). Residues 63–72 show a composition bias toward acidic residues; sequence DKEDQDSDSD. Residues 116 to 136 form a helical membrane-spanning segment; the sequence is IIRQAIFLLIVYLTLGVSIYS. The segment at residues 152-171 is an intramembrane region (pore-forming); it reads DALYFCIVTMCTIGYGDIAP. The helical transmembrane segment at 178 to 198 threads the bilayer; that stretch reads IFAVVFVLFGFGFLDILLSGV. The Stromal segment spans residues 199-248; it reads VNYVLDLQESMILTGIQTRQHHQHHHHHRFSAKDYIIDFEKGRMRIRMKV. The chain crosses the membrane as a helical span at residues 249–269; it reads CLALCVVVLCIGVGALVLHFV. Positions 276–295 form an intramembrane region, pore-forming; that stretch reads DSVYLSVMSVTTVGYGDRAF. A helical transmembrane segment spans residues 302 to 322; the sequence is LFAAVWLLVSTLAVARAFLYL. Residues 323–408 are Stromal-facing; it reads AEARIDRRHR…TLPDLLGDPL (86 aa). EF-hand domains follow at residues 339–374 and 378–408; these read LNREITVDDLLKADTYQHGFISKSEYIVLKLKEMGK and KDIDQVVIQFEKLDPNQIGKITLPDLLGDPL. Ca(2+) contacts are provided by Asp352, Glu363, Asp391, Asn393, Lys397, and Asp402.

Belongs to the two pore domain potassium channel (TC 1.A.1.7) family. Homodimer. As to expression, expressed in hydathodes and the vascular tissues of roots, stems, leaves and flowers.

The protein localises to the vacuole membrane. Probable voltage-independent potassium-selective tonoplast ion channel. The sequence is that of Two-pore potassium channel 5 (TPK5) from Arabidopsis thaliana (Mouse-ear cress).